The following is a 317-amino-acid chain: Ribonuclease Z (317 aa).

Positions 62, 64, 66, 67, 139, 210, and 268 each coordinate Zn(2+). D66 serves as the catalytic Proton acceptor.

The protein belongs to the RNase Z family. Homodimer. The cofactor is Zn(2+).

The enzyme catalyses Endonucleolytic cleavage of RNA, removing extra 3' nucleotides from tRNA precursor, generating 3' termini of tRNAs. A 3'-hydroxy group is left at the tRNA terminus and a 5'-phosphoryl group is left at the trailer molecule.. In terms of biological role, zinc phosphodiesterase, which displays some tRNA 3'-processing endonuclease activity. Probably involved in tRNA maturation, by removing a 3'-trailer from precursor tRNA. The polypeptide is Ribonuclease Z (Picosynechococcus sp. (strain ATCC 27264 / PCC 7002 / PR-6) (Agmenellum quadruplicatum)).